Reading from the N-terminus, the 783-residue chain is Tricorn protease-interacting factor F2 (783 aa).

Substrate contacts are provided by residues E107 and 236-240 (GAMEN). Zn(2+) is bound at residue H271. Catalysis depends on E272, which acts as the Proton acceptor. Residues H275 and E294 each contribute to the Zn(2+) site.

Belongs to the peptidase M1 family. Monomer. Part of the Tricorn proteolytic complex. Zn(2+) is required as a cofactor.

The protein localises to the cytoplasm. Functionally, proteases F1, F2 and F3 degrade oligopeptides produced by Tricorn (themselves probably produced by the proteasome), yielding free amino acids. The protein is Tricorn protease-interacting factor F2 (trf2) of Thermoplasma volcanium (strain ATCC 51530 / DSM 4299 / JCM 9571 / NBRC 15438 / GSS1).